The following is a 123-amino-acid chain: UPF0102 protein Cbei_1183 (123 aa).

Belongs to the UPF0102 family.

The protein is UPF0102 protein Cbei_1183 of Clostridium beijerinckii (strain ATCC 51743 / NCIMB 8052) (Clostridium acetobutylicum).